A 65-amino-acid chain; its full sequence is Large ribosomal subunit protein uL29 (65 aa).

The protein belongs to the universal ribosomal protein uL29 family.

This Buchnera aphidicola subsp. Acyrthosiphon pisum (strain 5A) protein is Large ribosomal subunit protein uL29.